We begin with the raw amino-acid sequence, 1274 residues long: DENN domain-containing protein 5B (1274 aa).

Position 2 is an N-acetylserine (serine 2). One can recognise a uDENN domain in the interval 39–244; the sequence is DELAGENFDQ…EVPLPPPGRS (206 aa). Serine 49 and serine 178 each carry phosphoserine. The 137-residue stretch at 263-399 folds into the cDENN domain; the sequence is ELPLSDYPLR…VDFIQELSEV (137 aa). The 181-residue stretch at 401–581 folds into the dDENN domain; the sequence is LQFGIPPEGS…DNKIMSQWEE (181 aa). The RUN 1 domain occupies 772 to 932; sequence LEENTLIASL…DYFCFTSVFT (161 aa). The residue at position 822 (serine 822) is a Phosphoserine. A helical membrane pass occupies residues 916-936; that stretch reads LLSLNAVDYFCFTSVFTTIMI. The PLAT domain maps to 936–1044; it reads IPYRSVIIPI…DDGSLERILI (109 aa). The residue at position 1062 (threonine 1062) is a Phosphothreonine. Residues serine 1068, serine 1076, and serine 1079 each carry the phosphoserine modification. The region spanning 1118-1267 is the RUN 2 domain; it reads TVLLCGENGL…QDFTIVLEGS (150 aa).

Belongs to the RAB6IP1 family.

The protein localises to the membrane. In terms of biological role, guanine nucleotide exchange factor (GEF) which may activate RAB39A and/or RAB39B. Promotes the exchange of GDP to GTP, converting inactive GDP-bound Rab proteins into their active GTP-bound form. In Mus musculus (Mouse), this protein is DENN domain-containing protein 5B (Dennd5b).